A 215-amino-acid chain; its full sequence is KID-containing protein 1 (215 aa).

Disordered regions lie at residues 1-132 and 150-183; these read MAGG…NKKR and NPKS…GDVL. Over residues 64–81 the composition is skewed to acidic residues; that stretch reads DSEEEDEESEEDNDEEEL. The Nuclear localization signal signature appears at 129–137; that stretch reads NKKRRLQIY. Residues 162 to 175 show a composition bias toward acidic residues; sequence DNDDEEGDDGDLSD. The segment at 177-204 is kinase-inducible domain (KID); that stretch reads ERGGDVLARRPSFKNRALKSMSCFALSD. Residue Ser188 is modified to Phosphoserine; by PKA.

In terms of assembly, interacts with HDA19; Ser-188 is critical for this interaction. Strongly expressed in stems, flowers, roots and immature siliques, but not detected in leaf blades of seedlings.

Its subcellular location is the nucleus. Functionally, transcription activator which may regulates gene expression through interaction with the histone deacetylase HDA19. The polypeptide is KID-containing protein 1 (Brassica napus (Rape)).